Here is a 235-residue protein sequence, read N- to C-terminus: Large ribosomal subunit protein uL3 (235 aa).

Position 151 is an N5-methylglutamine (glutamine 151).

This sequence belongs to the universal ribosomal protein uL3 family. In terms of assembly, part of the 50S ribosomal subunit. Forms a cluster with proteins L14 and L19. Methylated by PrmB.

In terms of biological role, one of the primary rRNA binding proteins, it binds directly near the 3'-end of the 23S rRNA, where it nucleates assembly of the 50S subunit. In Rhodospirillum rubrum (strain ATCC 11170 / ATH 1.1.1 / DSM 467 / LMG 4362 / NCIMB 8255 / S1), this protein is Large ribosomal subunit protein uL3.